A 129-amino-acid polypeptide reads, in one-letter code: Fluoride-specific ion channel FluC 2 (129 aa).

The next 4 membrane-spanning stretches (helical) occupy residues 4-24 (LDVMWVGLGGGVGSLGRWWIG), 39-59 (TFLINISGAFVIGYLSVLFGV), 65-85 (YGTMLNAGVLTGILGGYTTFS), and 100-120 (GGLAVFYLVASVLSGLFAAWL). Residues G79 and T82 each coordinate Na(+).

Belongs to the fluoride channel Fluc/FEX (TC 1.A.43) family.

The protein localises to the cell inner membrane. The catalysed reaction is fluoride(in) = fluoride(out). Its activity is regulated as follows. Na(+) is not transported, but it plays an essential structural role and its presence is essential for fluoride channel function. Functionally, fluoride-specific ion channel. Important for reducing fluoride concentration in the cell, thus reducing its toxicity. The polypeptide is Fluoride-specific ion channel FluC 2 (Brucella suis biovar 1 (strain 1330)).